Here is a 310-residue protein sequence, read N- to C-terminus: Olfactory receptor 5H14 (310 aa).

Residues 1-28 (MEEENATLLTEFVLTGFLYQPQWKIPLF) are Extracellular-facing. Asn5 is a glycosylation site (N-linked (GlcNAc...) asparagine). The chain crosses the membrane as a helical span at residues 29–49 (LAFLVIYLITIMGNLGLIAVI). The Cytoplasmic segment spans residues 50-56 (WKDPHLH). Residues 57-77 (IPMYLLLGNLAFVDALLSSSV) form a helical membrane-spanning segment. Over 78–98 (TLKMLINFLAKSKMISLSECK) the chain is Extracellular. Cysteines 97 and 179 form a disulfide. The helical transmembrane segment at 99-119 (IQLFSFAISVTTECFLLATMA) threads the bilayer. Residues 120–143 (YDRYVAICKPLLYPAIMTNGLCIR) lie on the Cytoplasmic side of the membrane. A helical transmembrane segment spans residues 144-164 (LLILSYVGGLLHALIHEGFLF). Topologically, residues 165–195 (RLTFCNSNIIQHFYCDIIPLLKISYTDSSIN) are extracellular. The chain crosses the membrane as a helical span at residues 196–216 (FLMVFIFAGSIQVFTIGTVLI). The Cytoplasmic segment spans residues 217 to 240 (SYIFVLYTILKKKSVKGMRKAFST). The chain crosses the membrane as a helical span at residues 241 to 261 (CGAHLLSVSLYYGPLAFMYMG). Over 262–271 (SASPQADDQD) the chain is Extracellular. Residues 272–292 (MMESLFYTVIVPLLNPMIYSL) traverse the membrane as a helical segment. At 293-310 (RNKQVIASFTKMFKRNDV) the chain is on the cytoplasmic side.

Belongs to the G-protein coupled receptor 1 family.

The protein resides in the cell membrane. Functionally, odorant receptor. The chain is Olfactory receptor 5H14 (OR5H14) from Homo sapiens (Human).